The primary structure comprises 155 residues: Ribosomal RNA large subunit methyltransferase H (155 aa).

Residues L72, G103, and L122–L127 contribute to the S-adenosyl-L-methionine site.

It belongs to the RNA methyltransferase RlmH family. As to quaternary structure, homodimer.

It is found in the cytoplasm. The enzyme catalyses pseudouridine(1915) in 23S rRNA + S-adenosyl-L-methionine = N(3)-methylpseudouridine(1915) in 23S rRNA + S-adenosyl-L-homocysteine + H(+). In terms of biological role, specifically methylates the pseudouridine at position 1915 (m3Psi1915) in 23S rRNA. This chain is Ribosomal RNA large subunit methyltransferase H, found in Haemophilus ducreyi (strain 35000HP / ATCC 700724).